The sequence spans 157 residues: Succinate dehydrogenase [ubiquinone] cytochrome b small subunit, mitochondrial (157 aa).

Residues 1–45 constitute a mitochondrion transit peptide; the sequence is MAALVLLRAGLARPRGVPTALLRGTLLRHSAVLTAAADRSAPARQ. Residues 46-61 are Mitochondrial matrix-facing; sequence SHGGAPQGHGSSKAAS. A helical transmembrane segment spans residues 62–83; sequence LHWTSERAVSALLLGLLPAAYL. At 84-88 the chain is on the mitochondrial intermembrane side; that stretch reads YPGPA. Residues 89-109 form a helical membrane-spanning segment; the sequence is VDYSLAAALTLHGHWGLGQVI. His100 serves as a coordination point for heme b. Residues 110-118 are Mitochondrial matrix-facing; it reads TDYVHGDTP. Tyr112 is a binding site for a ubiquinone. The helical transmembrane segment at 119–140 threads the bilayer; that stretch reads IKVANTGLYVLSAITFTGLCYF. Over 141–157 the chain is Mitochondrial intermembrane; it reads NYYDVGICKAVAMLWSI.

This sequence belongs to the CybS family. Component of complex II composed of four subunits: the flavoprotein (FP) SDHA, iron-sulfur protein (IP) SDHB, and a cytochrome b560 composed of SDHC and SDHD.

The protein localises to the mitochondrion inner membrane. The protein operates within carbohydrate metabolism; tricarboxylic acid cycle. Functionally, membrane-anchoring subunit of succinate dehydrogenase (SDH) that is involved in complex II of the mitochondrial electron transport chain and is responsible for transferring electrons from succinate to ubiquinone (coenzyme Q). SDH also oxidizes malate to the non-canonical enol form of oxaloacetate, enol-oxaloacetate. Enol-oxaloacetate, which is a potent inhibitor of the succinate dehydrogenase activity, is further isomerized into keto-oxaloacetate. In Gallus gallus (Chicken), this protein is Succinate dehydrogenase [ubiquinone] cytochrome b small subunit, mitochondrial (SDHD).